A 232-amino-acid polypeptide reads, in one-letter code: N-(5'-phosphoribosyl)anthranilate isomerase (232 aa).

It belongs to the TrpF family.

The catalysed reaction is N-(5-phospho-beta-D-ribosyl)anthranilate = 1-(2-carboxyphenylamino)-1-deoxy-D-ribulose 5-phosphate. Its pathway is amino-acid biosynthesis; L-tryptophan biosynthesis; L-tryptophan from chorismate: step 3/5. This Lipomyces starkeyi (Oleaginous yeast) protein is N-(5'-phosphoribosyl)anthranilate isomerase (TRP1).